A 993-amino-acid polypeptide reads, in one-letter code: Lateral signaling target protein 2 homolog (993 aa).

Disordered stretches follow at residues 340–449 (DQRN…DTTD), 494–623 (DGYG…TVVQ), 759–813 (GARH…GDQE), and 825–902 (AVNE…PPAW). The span at 343 to 360 (NNNNNINNNSSSSSNSNS) shows a compositional bias: low complexity. The segment covering 372–405 (RSPSMLSLSTASPTPSHSIGSTFSAATSSTNPPV) has biased composition (polar residues). Residues 409-448 (DGDDADDDDDGDDDDEDDDDDVDDDLVGNDDSDDDDDDTT) are compositionally biased toward acidic residues. 2 positions are modified to phosphoserine: S525 and S526. Polar residues predominate over residues 535–549 (SHNNTTTIKSPDSDG). Over residues 559–608 (SRQRHSHHHHRHHHHHHRHSSHSSHSHHHQHQQHHSQPHPHRTTRSGRKR) the composition is skewed to basic residues. Low complexity predominate over residues 759-801 (GARHSAGASMQRNHTTIDNNNSTSSSPPDATITTTTTTTTTRS). S808 is subject to Phosphoserine. Composition is skewed to low complexity over residues 842-862 (SNTP…QNSP) and 884-896 (TTAT…GTGT). An FYVE-type zinc finger spans residues 905-965 (DGKAPRCMSC…VCRDCYAREI (61 aa)). Residues C911, C914, C927, C930, C935, C938, C957, and C960 each contribute to the Zn(2+) site. A disordered region spans residues 968 to 993 (SGGGGGGVVQMQRQQAANRPQTASAS). Polar residues predominate over residues 978 to 993 (MQRQQAANRPQTASAS).

Belongs to the lst-2 family.

In terms of biological role, negative regulator of epidermal growth factor receptor (EGFR) signaling. This Drosophila willistoni (Fruit fly) protein is Lateral signaling target protein 2 homolog.